The sequence spans 710 residues: Protein-glutamine gamma-glutamyltransferase Z (710 aa).

Active-site residues include Cys-279, His-338, and Asp-361. Ca(2+) contacts are provided by Asn-401, Asp-403, Glu-450, and Glu-455.

This sequence belongs to the transglutaminase superfamily. Transglutaminase family. Ca(2+) is required as a cofactor. As to expression, widely expressed.

The enzyme catalyses L-glutaminyl-[protein] + L-lysyl-[protein] = [protein]-L-lysyl-N(6)-5-L-glutamyl-[protein] + NH4(+). Catalyzes the cross-linking of proteins and the conjugation of polyamines to proteins. The chain is Protein-glutamine gamma-glutamyltransferase Z (TGM7) from Homo sapiens (Human).